The chain runs to 95 residues: PIK3R3 upstream open reading frame protein (95 aa).

Residues 1 to 27 form a disordered region; it reads MGPSRLVRGPRPQGMRSPYRRPGMGWP.

This Homo sapiens (Human) protein is PIK3R3 upstream open reading frame protein.